The primary structure comprises 338 residues: Uroporphyrinogen decarboxylase (338 aa).

Substrate contacts are provided by residues 25–29 (RQAGR), Phe-44, Asp-75, Tyr-146, Ser-201, and His-314.

The protein belongs to the uroporphyrinogen decarboxylase family. As to quaternary structure, homodimer.

The protein localises to the cytoplasm. The catalysed reaction is uroporphyrinogen III + 4 H(+) = coproporphyrinogen III + 4 CO2. The protein operates within porphyrin-containing compound metabolism; protoporphyrin-IX biosynthesis; coproporphyrinogen-III from 5-aminolevulinate: step 4/4. In terms of biological role, catalyzes the decarboxylation of four acetate groups of uroporphyrinogen-III to yield coproporphyrinogen-III. This chain is Uroporphyrinogen decarboxylase, found in Aquifex aeolicus (strain VF5).